A 389-amino-acid polypeptide reads, in one-letter code: Stilbene synthase 1 (389 aa).

55 to 58 is a substrate binding site; sequence KFQR. Cys-164 is an active-site residue. Substrate-binding positions include Leu-267 and 305–307; that span reads GGR.

The protein belongs to the thiolase-like superfamily. Chalcone/stilbene synthases family. Homodimer.

The protein localises to the cytoplasm. It catalyses the reaction 4-coumaroyl-CoA + 3 malonyl-CoA + 3 H(+) = trans-resveratrol + 4 CO2 + 4 CoA. Its pathway is phytoalexin biosynthesis; 3,4',5-trihydroxystilbene biosynthesis; 3,4',5-trihydroxystilbene from trans-4-coumarate: step 2/2. The chain is Stilbene synthase 1 from Arachis hypogaea (Peanut).